A 304-amino-acid chain; its full sequence is tRNA dimethylallyltransferase (304 aa).

Position 2–9 (2–9) interacts with ATP; sequence GPTASGKT. 4-9 contributes to the substrate binding site; sequence TASGKT. Interaction with substrate tRNA regions lie at residues 27–30, 151–155, 232–237, and 265–272; these read DSAL, QRINR, RCVGYR, and KRQITWLR.

It belongs to the IPP transferase family. As to quaternary structure, monomer. It depends on Mg(2+) as a cofactor.

The enzyme catalyses adenosine(37) in tRNA + dimethylallyl diphosphate = N(6)-dimethylallyladenosine(37) in tRNA + diphosphate. Functionally, catalyzes the transfer of a dimethylallyl group onto the adenine at position 37 in tRNAs that read codons beginning with uridine, leading to the formation of N6-(dimethylallyl)adenosine (i(6)A). The polypeptide is tRNA dimethylallyltransferase (Actinobacillus pleuropneumoniae serotype 7 (strain AP76)).